The chain runs to 865 residues: Aconitate hydratase B (865 aa).

Residues Arg191, 244-246, 414-416, and Ser498 contribute to the substrate site; these read SSR and QDT. [4Fe-4S] cluster contacts are provided by Cys710, Cys769, and Cys772. Substrate is bound by residues Arg791 and Arg796.

This sequence belongs to the aconitase/IPM isomerase family. Monomer. AcnB can also form a homodimer. The monomer-homodimer transition is dependent on iron availability and the carboxymethylation of C-273 inhibits the dimer formation. Requires [4Fe-4S] cluster as cofactor.

The catalysed reaction is citrate = D-threo-isocitrate. It catalyses the reaction (2S,3R)-3-hydroxybutane-1,2,3-tricarboxylate = 2-methyl-cis-aconitate + H2O. It functions in the pathway organic acid metabolism; propanoate degradation. It participates in carbohydrate metabolism; tricarboxylic acid cycle; isocitrate from oxaloacetate: step 2/2. Functionally, involved in the catabolism of short chain fatty acids (SCFA) via the tricarboxylic acid (TCA)(acetyl degradation route) and the 2-methylcitrate cycle I (propionate degradation route). Catalyzes the reversible isomerization of citrate to isocitrate via cis-aconitate. Also catalyzes the hydration of 2-methyl-cis-aconitate to yield (2R,3S)-2-methylisocitrate. The apo form of AcnB functions as a RNA-binding regulatory protein. During oxidative stress inactive AcnB apo-enzyme without iron sulfur clusters binds the acnB mRNA 3' UTRs (untranslated regions), stabilizes acnB mRNA and increases AcnB synthesis, thus mediating a post-transcriptional positive autoregulatory switch. AcnB also decreases the stability of the sodA transcript. The protein is Aconitate hydratase B of Escherichia coli (strain K12).